Reading from the N-terminus, the 426-residue chain is MAFQIPRGTQDVLPGDSEKWQYVEHIARSLCSRYGYQEIRTPIFEHTELFLRGVGDTTDIVQKEMYTFEDKGGRALTLRPEGTAPVVRAFVEHKLYGSPNQPLKLYYSGPMFRYERPEAGRFRQFVQFGVEALGSSDPAIDAEVMALAMHIYEALGLKRIRLVINSLGDLDSRRAHREALVRHFSNRIHELCPDCQTRLHTNPLRILDCKKDRDHELMATAPSILDYLNDESRAYFEKVKQYLTALGIPFVIDARLVRGLDYYNHTTFEIMSEAEGFGAAATLCGGGRYNGLVQEIGGPETPGIGFALSIERLLAALDAEGVELPVESGLDCYVVAVGERAKDEAVRLVYALRRSGLRVDQDYLGRKLKAQLKAADRLGASFVAIIGDEELERQEAAVKHMASGEQTNVPLGELAHFLHERIGKEE.

The protein belongs to the class-II aminoacyl-tRNA synthetase family. Homodimer.

The protein localises to the cytoplasm. It catalyses the reaction tRNA(His) + L-histidine + ATP = L-histidyl-tRNA(His) + AMP + diphosphate + H(+). The protein is Histidine--tRNA ligase of Geobacillus kaustophilus (strain HTA426).